The sequence spans 40 residues: uncharacterized protein (40 aa).

This is an uncharacterized protein from Haemophilus influenzae (strain ATCC 51907 / DSM 11121 / KW20 / Rd).